The primary structure comprises 188 residues: Elongation factor P (188 aa).

It belongs to the elongation factor P family.

The protein localises to the cytoplasm. It functions in the pathway protein biosynthesis; polypeptide chain elongation. Involved in peptide bond synthesis. Stimulates efficient translation and peptide-bond synthesis on native or reconstituted 70S ribosomes in vitro. Probably functions indirectly by altering the affinity of the ribosome for aminoacyl-tRNA, thus increasing their reactivity as acceptors for peptidyl transferase. This Rhodopseudomonas palustris (strain ATCC BAA-98 / CGA009) protein is Elongation factor P.